We begin with the raw amino-acid sequence, 532 residues long: Phosphoenolpyruvate carboxykinase (ATP) (532 aa).

Substrate contacts are provided by Arg-60, Tyr-200, and Lys-206. ATP contacts are provided by residues Lys-206, His-225, and 242–250; that span reads GLSGTGKTT. Positions 206 and 225 each coordinate Mn(2+). Ser-244 contributes to the substrate binding site. Asp-263 contacts Mn(2+). ATP-binding positions include Glu-291, Arg-327, 443–444, and Thr-449; that span reads RI. Arg-327 is a binding site for substrate.

This sequence belongs to the phosphoenolpyruvate carboxykinase (ATP) family. As to quaternary structure, monomer. Requires Mn(2+) as cofactor.

Its subcellular location is the cytoplasm. The catalysed reaction is oxaloacetate + ATP = phosphoenolpyruvate + ADP + CO2. The protein operates within carbohydrate biosynthesis; gluconeogenesis. Its activity is regulated as follows. Inhibited by p-chloromercuribenzoate. Its function is as follows. Involved in gluconeogenesis. Catalyzes the conversion of oxaloacetate (OAA) to phosphoenolpyruvate (PEP) through direct phosphoryl transfer between the nucleoside triphosphate and OAA. This chain is Phosphoenolpyruvate carboxykinase (ATP), found in Anaerobiospirillum succiniciproducens.